Here is a 396-residue protein sequence, read N- to C-terminus: G-protein coupled receptor 84 (396 aa).

Residues 1–21 lie on the Extracellular side of the membrane; the sequence is MWNSSDANFSCYHESVLGYRY. Residues Asn3 and Asn8 are each glycosylated (N-linked (GlcNAc...) asparagine). The helical transmembrane segment at 22–42 threads the bilayer; it reads FAVIWGVAVAVTGTVGNVLTL. Residues 43 to 57 lie on the Cytoplasmic side of the membrane; it reads LALAIRPKLRTRFNL. Residues 58 to 78 traverse the membrane as a helical segment; sequence LIANLTLADLLYCTLLQPFSV. Residues 79–94 are Extracellular-facing; sequence DTYLHLHWRTGAVFCR. A helical membrane pass occupies residues 95-115; it reads IFGLLLFTSNSVSILTLCLIA. Topologically, residues 116–135 are cytoplasmic; the sequence is LGRYLLIAHPKLFPQVFSAK. The chain crosses the membrane as a helical span at residues 136–156; that stretch reads GIVLALVGSWVVGVTSFAPLW. Topologically, residues 157-180 are extracellular; the sequence is NVFVLVPVVCTCSFDRMRGRPYTT. The chain crosses the membrane as a helical span at residues 181-201; it reads ILMGIYFVLGLSSVGVFYCLI. Over 202 to 320 the chain is Cytoplasmic; sequence HRQVKRAARA…PSEFGKVTRM (119 aa). 2 positions are modified to phosphoserine: Ser221 and Ser224. Residues 241-310 are disordered; the sequence is LDSGVASRGP…TAGARRATDA (70 aa). Residues 253–269 are compositionally biased toward polar residues; the sequence is GISSEPVSAATTQTLEG. 2 positions are modified to phosphothreonine: Thr263 and Thr264. Over residues 290–308 the composition is skewed to basic and acidic residues; the sequence is SLPEVHRKPRETAGARRAT. Residues 321 to 341 form a helical membrane-spanning segment; that stretch reads CFAVFLCFALSYIPFLLLNIL. Residues 342 to 352 lie on the Extracellular side of the membrane; it reads DARGRAPRVVH. A helical transmembrane segment spans residues 353 to 373; that stretch reads MVAANLTWLNSCINPVLYAAM. Topologically, residues 374-396 are cytoplasmic; that stretch reads NRQFRHAYGSILKRGPQSFRRFH.

It belongs to the G-protein coupled receptor 1 family. Interacts with ARRB2 and ARR3. In terms of processing, phosphorylated by a subset of GPR84-activating ligands. Constitutively phosphorylated at Ser-221 and Ser-224 in the absence of 2-HTP. By contrast, Thr-263 and Thr-264 are phosphorylated only following prior cell treatment with 2-HTP. In terms of tissue distribution, expressed predominantly in hematopoietic tissues. Expressed mainly in the bone marrow with transcripts also detected in spleen, the lymph node, liver and the lung.

Its subcellular location is the cell membrane. Its function is as follows. G protein-coupled receptor that responds endogenously to dietary fatty acids or nutrient, specifically medium-chain free fatty acid (FFA) with carbon chain lengths of C9 to C14. Capric acid (C10:0), undecanoic acid (C11:0) and lauric acid (C12:0) are the most potent agonists. In immune cells, functions as a pro-inflammatory receptor via 6-OAU and promotes the expression of pro-inflammatory mediators such as TNFalpha, IL-6 and IL-12B as well as stimulating chemotactic responses through activation of signaling mediators AKT, ERK and NF-kappa-B (by sim). In addition, triggers increased bacterial adhesion and phagocytosis in macrophages and regulates pro-inflammatory function via enhancing NLRP3 inflammasome activation. Also plays an important role in inflammation by modulating neutrophil functions. Mechanistically, promotes neutrophil chemotaxis, reactive oxygen species (ROS) production and degranulation via LYN-AKT/ERK pathway. To regulate ROS production, communicates with the two formyl peptide receptors FPR2 and FPR1 to control the NADPH oxidase activity in neutrophils. The chain is G-protein coupled receptor 84 (Gpr84) from Mus musculus (Mouse).